A 378-amino-acid chain; its full sequence is tRNA (guanine(26)-N(2))-dimethyltransferase (378 aa).

Residues 4-374 (KEVTEGKVRI…KGYEEIIRCV (371 aa)) enclose the Trm1 methyltransferase domain. Residues R44, R69, D87, D114, and A115 each contribute to the S-adenosyl-L-methionine site. Zn(2+)-binding residues include C246, C249, C263, and C266.

Belongs to the class I-like SAM-binding methyltransferase superfamily. Trm1 family.

The enzyme catalyses guanosine(26) in tRNA + 2 S-adenosyl-L-methionine = N(2)-dimethylguanosine(26) in tRNA + 2 S-adenosyl-L-homocysteine + 2 H(+). In terms of biological role, dimethylates a single guanine residue at position 26 of a number of tRNAs using S-adenosyl-L-methionine as donor of the methyl groups. The polypeptide is tRNA (guanine(26)-N(2))-dimethyltransferase (Saccharolobus islandicus (strain M.16.27) (Sulfolobus islandicus)).